The following is a 361-amino-acid chain: 3-dehydroquinate synthase (361 aa).

NAD(+) contacts are provided by residues 106–110 (GVVGD), 130–131 (TT), Lys-143, and Lys-152. The Zn(2+) site is built by Glu-185, His-248, and His-265.

The protein belongs to the sugar phosphate cyclases superfamily. Dehydroquinate synthase family. NAD(+) serves as cofactor. It depends on Co(2+) as a cofactor. Zn(2+) is required as a cofactor.

Its subcellular location is the cytoplasm. The catalysed reaction is 7-phospho-2-dehydro-3-deoxy-D-arabino-heptonate = 3-dehydroquinate + phosphate. The protein operates within metabolic intermediate biosynthesis; chorismate biosynthesis; chorismate from D-erythrose 4-phosphate and phosphoenolpyruvate: step 2/7. Functionally, catalyzes the conversion of 3-deoxy-D-arabino-heptulosonate 7-phosphate (DAHP) to dehydroquinate (DHQ). The sequence is that of 3-dehydroquinate synthase from Leptospira interrogans serogroup Icterohaemorrhagiae serovar copenhageni (strain Fiocruz L1-130).